The following is a 238-amino-acid chain: Acyl-protein thioesterase 1 (238 aa).

Catalysis depends on charge relay system residues S120, D174, and H219.

Belongs to the AB hydrolase superfamily. AB hydrolase 2 family.

It is found in the cytoplasm. It localises to the nucleus. The catalysed reaction is S-hexadecanoyl-L-cysteinyl-[protein] + H2O = L-cysteinyl-[protein] + hexadecanoate + H(+). Hydrolyzes fatty acids from S-acylated cysteine residues in proteins with a strong preference for palmitoylated G-alpha proteins over other acyl substrates. Mediates the deacylation of G-alpha proteins such as GPA1 in vivo, but has weak or no activity toward palmitoylated Ras proteins. Has weak lysophospholipase activity in vitro; however such activity may not exist in vivo. This Cryptococcus neoformans var. neoformans serotype D (strain B-3501A) (Filobasidiella neoformans) protein is Acyl-protein thioesterase 1.